A 381-amino-acid polypeptide reads, in one-letter code: Dual-specificity RNA methyltransferase RlmN (381 aa).

Glu95 serves as the catalytic Proton acceptor. One can recognise a Radical SAM core domain in the interval 101–339 (DGRRGTLCVS…MTTVRTTRGD (239 aa)). Cysteines 108 and 345 form a disulfide. [4Fe-4S] cluster-binding residues include Cys115, Cys119, and Cys122. S-adenosyl-L-methionine is bound by residues 169 to 170 (GE), Ser201, 223 to 225 (SLH), and Asn302. Cys345 functions as the S-methylcysteine intermediate in the catalytic mechanism.

Belongs to the radical SAM superfamily. RlmN family. It depends on [4Fe-4S] cluster as a cofactor.

The protein resides in the cytoplasm. It carries out the reaction adenosine(2503) in 23S rRNA + 2 reduced [2Fe-2S]-[ferredoxin] + 2 S-adenosyl-L-methionine = 2-methyladenosine(2503) in 23S rRNA + 5'-deoxyadenosine + L-methionine + 2 oxidized [2Fe-2S]-[ferredoxin] + S-adenosyl-L-homocysteine. The enzyme catalyses adenosine(37) in tRNA + 2 reduced [2Fe-2S]-[ferredoxin] + 2 S-adenosyl-L-methionine = 2-methyladenosine(37) in tRNA + 5'-deoxyadenosine + L-methionine + 2 oxidized [2Fe-2S]-[ferredoxin] + S-adenosyl-L-homocysteine. In terms of biological role, specifically methylates position 2 of adenine 2503 in 23S rRNA and position 2 of adenine 37 in tRNAs. m2A2503 modification seems to play a crucial role in the proofreading step occurring at the peptidyl transferase center and thus would serve to optimize ribosomal fidelity. This is Dual-specificity RNA methyltransferase RlmN from Alcanivorax borkumensis (strain ATCC 700651 / DSM 11573 / NCIMB 13689 / SK2).